A 123-amino-acid chain; its full sequence is Large ribosomal subunit protein bL17 (123 aa).

It belongs to the bacterial ribosomal protein bL17 family. In terms of assembly, part of the 50S ribosomal subunit. Contacts protein L32.

The protein is Large ribosomal subunit protein bL17 of Borreliella burgdorferi (strain ATCC 35210 / DSM 4680 / CIP 102532 / B31) (Borrelia burgdorferi).